A 477-amino-acid chain; its full sequence is Probable periplasmic serine endoprotease DegP-like (477 aa).

The N-terminal stretch at 1–27 (MSIPRLKSYLMMFAAVLMLGQVLTAQA) is a signal peptide. Residues H117, D147, and S220 each act as charge relay system in the active site. Substrate contacts are provided by residues 218–220 (GNS) and 275–279 (LGVVI). PDZ domains lie at 264-355 (LKKD…IRNG) and 361-466 (DISV…LRQG).

This sequence belongs to the peptidase S1C family.

It localises to the periplasm. It catalyses the reaction Acts on substrates that are at least partially unfolded. The cleavage site P1 residue is normally between a pair of hydrophobic residues, such as Val-|-Val.. Its function is as follows. Might be efficient in the degradation of transiently denatured and unfolded proteins which accumulate in the periplasm following stress conditions. This Pseudomonas putida (strain ATCC 700007 / DSM 6899 / JCM 31910 / BCRC 17059 / LMG 24140 / F1) protein is Probable periplasmic serine endoprotease DegP-like.